Here is a 130-residue protein sequence, read N- to C-terminus: Type VII secretion system extracellular protein C (130 aa).

The protein belongs to the EsxC family. Forms both homodimers and heterodimers with EsxA. Homodimerization is calcium-dependent.

It is found in the secreted. Implements its pathogenic function during infection. The polypeptide is Type VII secretion system extracellular protein C (Staphylococcus aureus (strain Mu50 / ATCC 700699)).